Consider the following 336-residue polypeptide: Dihydroorotate dehydrogenase (quinone) (336 aa).

FMN contacts are provided by residues 62–66 (AGLDK) and threonine 86. Residue lysine 66 coordinates substrate. Residue 111–115 (NRMGF) participates in substrate binding. FMN-binding residues include asparagine 139 and asparagine 172. Asparagine 172 lines the substrate pocket. The active-site Nucleophile is the serine 175. Asparagine 177 serves as a coordination point for substrate. 2 residues coordinate FMN: lysine 217 and threonine 245. 246–247 (NT) contributes to the substrate binding site. FMN is bound by residues glycine 268, glycine 297, and 318–319 (YS).

It belongs to the dihydroorotate dehydrogenase family. Type 2 subfamily. In terms of assembly, monomer. FMN serves as cofactor.

It is found in the cell membrane. It carries out the reaction (S)-dihydroorotate + a quinone = orotate + a quinol. Its pathway is pyrimidine metabolism; UMP biosynthesis via de novo pathway; orotate from (S)-dihydroorotate (quinone route): step 1/1. Functionally, catalyzes the conversion of dihydroorotate to orotate with quinone as electron acceptor. This Edwardsiella ictaluri (strain 93-146) protein is Dihydroorotate dehydrogenase (quinone).